A 444-amino-acid polypeptide reads, in one-letter code: Argininosuccinate synthase (444 aa).

Residues alanine 18 to serine 26 and alanine 44 contribute to the ATP site. Tyrosine 100 serves as a coordination point for L-citrulline. The ATP site is built by glycine 130 and threonine 132. L-aspartate contacts are provided by threonine 132, asparagine 136, and aspartate 137. Residue asparagine 136 participates in L-citrulline binding. Aspartate 137 contributes to the ATP binding site. Arginine 140 and serine 193 together coordinate L-citrulline. Aspartate 195 is a binding site for ATP. L-citrulline contacts are provided by threonine 202, glutamate 204, and glutamate 281.

This sequence belongs to the argininosuccinate synthase family. Type 2 subfamily. In terms of assembly, homotetramer.

Its subcellular location is the cytoplasm. The enzyme catalyses L-citrulline + L-aspartate + ATP = 2-(N(omega)-L-arginino)succinate + AMP + diphosphate + H(+). It functions in the pathway amino-acid biosynthesis; L-arginine biosynthesis; L-arginine from L-ornithine and carbamoyl phosphate: step 2/3. The chain is Argininosuccinate synthase from Haemophilus influenzae (strain PittGG).